The primary structure comprises 403 residues: Chorismate synthase (403 aa).

Arginine 40 and arginine 46 together coordinate NADP(+). Residues 140–142 (RSS), 261–262 (QA), glycine 305, 320–324 (KPIST), and arginine 346 each bind FMN.

Belongs to the chorismate synthase family. As to quaternary structure, homotetramer. FMNH2 is required as a cofactor.

It catalyses the reaction 5-O-(1-carboxyvinyl)-3-phosphoshikimate = chorismate + phosphate. It participates in metabolic intermediate biosynthesis; chorismate biosynthesis; chorismate from D-erythrose 4-phosphate and phosphoenolpyruvate: step 7/7. Its function is as follows. Catalyzes the anti-1,4-elimination of the C-3 phosphate and the C-6 proR hydrogen from 5-enolpyruvylshikimate-3-phosphate (EPSP) to yield chorismate, which is the branch point compound that serves as the starting substrate for the three terminal pathways of aromatic amino acid biosynthesis. This reaction introduces a second double bond into the aromatic ring system. The sequence is that of Chorismate synthase from Corynebacterium diphtheriae (strain ATCC 700971 / NCTC 13129 / Biotype gravis).